The sequence spans 79 residues: Small ribosomal subunit protein bS18 (79 aa).

It belongs to the bacterial ribosomal protein bS18 family. Part of the 30S ribosomal subunit. Forms a tight heterodimer with protein bS6.

Binds as a heterodimer with protein bS6 to the central domain of the 16S rRNA, where it helps stabilize the platform of the 30S subunit. This chain is Small ribosomal subunit protein bS18, found in Salinispora arenicola (strain CNS-205).